The sequence spans 534 residues: Serine/threonine-protein kinase NLK (534 aa).

Sufficient for interaction with DAPK3 stretches follow at residues Leu8–His132 and His131–Ile423. Required for interaction with TAB2 stretches follow at residues Leu8–Gln311 and Tyr441–Glu534. Disordered regions lie at residues Ala29–Ala79 and Gln97–Pro147. The segment covering Gly33–His61 has biased composition (basic residues). Residues Pro110–Ala126 are compositionally biased toward low complexity. Residues Lys129–His138 are compositionally biased toward basic residues. Residues Ile145–Leu434 enclose the Protein kinase domain. ATP contacts are provided by residues Ile151–Val159 and Lys174. Asp271 acts as the Proton acceptor in catalysis. The residue at position 305 (Thr305) is a Phosphothreonine; by autocatalysis. The TQE motif lies at Thr305 to Glu307. The segment at Asp435–Glu534 is required for homodimerization and kinase activation and localization to the nucleus. At Ser529 the chain carries Phosphoserine.

Belongs to the protein kinase superfamily. CMGC Ser/Thr protein kinase family. MAP kinase subfamily. As to quaternary structure, homodimer. Homodimerization is required for intermolecular autophosphorylation, kinase activation and nuclear localization. May interact with components of cullin-RING-based SCF (SKP1-CUL1-F-box protein) E3 ubiquitin-protein ligase complexes. Interacts with LEF1, MEF2A, MYBL1 and MYBL2. Interacts with the upstream activating kinases HIPK2 and MAP3K7/TAK1. Interaction with MAP3K7/TAK1 seems to be indirect, and may be mediated by other proteins such as STAT3, TAB1 and TAB2. Interacts with and phosphorylates a number of transcription factors including FOXO1, FOXO3, FOXO4, MYB, NOTCH1 and TCF7L2/TCF4. Interacts with DAPK3/ZIPK, and this interaction may disrupt interaction with transcription factors such as TCF7L2/TCF4. Forms a transcriptional repressor complex with CHD7, PPARG and SETDB1. Interacts with RNF138/NARF. Interacts with ATF5; the interaction stabilizes ATF5 at the protein level in a kinase-independent manner. Mg(2+) is required as a cofactor. Post-translationally, phosphorylated on Thr-305. Intermolecular autophosphorylation on Thr-305 activates the enzyme.

The protein localises to the nucleus. It is found in the cytoplasm. It carries out the reaction L-seryl-[protein] + ATP = O-phospho-L-seryl-[protein] + ADP + H(+). The enzyme catalyses L-threonyl-[protein] + ATP = O-phospho-L-threonyl-[protein] + ADP + H(+). Activated by the non-canonical Wnt signaling pathway, in which WNT5A leads to activation of MAP3K7/TAK1 and HIPK2, which subsequently phosphorylates and activates this protein. Activated by dimerization and subsequent intermolecular autophosphorylation on Thr-305. Other cytokines such as IL6 may also activate this regulatory circuit. Serine/threonine-protein kinase that regulates a number of transcription factors with key roles in cell fate determination. Positive effector of the non-canonical Wnt signaling pathway, acting downstream of WNT5A, MAP3K7/TAK1 and HIPK2. Negative regulator of the canonical Wnt/beta-catenin signaling pathway. Binds to and phosphorylates TCF7L2/TCF4 and LEF1, promoting the dissociation of the TCF7L2/LEF1/beta-catenin complex from DNA, as well as the ubiquitination and subsequent proteolysis of LEF1. Together these effects inhibit the transcriptional activation of canonical Wnt/beta-catenin target genes. Negative regulator of the Notch signaling pathway. Binds to and phosphorylates NOTCH1, thereby preventing the formation of a transcriptionally active ternary complex of NOTCH1, RBPJ/RBPSUH and MAML1. Negative regulator of the MYB family of transcription factors. Phosphorylation of MYB leads to its subsequent proteolysis while phosphorylation of MYBL1 and MYBL2 inhibits their interaction with the coactivator CREBBP. Other transcription factors may also be inhibited by direct phosphorylation of CREBBP itself. Acts downstream of IL6 and MAP3K7/TAK1 to phosphorylate STAT3, which is in turn required for activation of NLK by MAP3K7/TAK1. Upon IL1B stimulus, cooperates with ATF5 to activate the transactivation activity of C/EBP subfamily members. Phosphorylates ATF5 but also stabilizes ATF5 protein levels in a kinase-independent manner. Acts as an inhibitor of the mTORC1 complex in response to osmotic stress by mediating phosphorylation of RPTOR, thereby preventing recruitment of the mTORC1 complex to lysosomes. The sequence is that of Serine/threonine-protein kinase NLK (NLK) from Bos taurus (Bovine).